The primary structure comprises 177 residues: Large ribosomal subunit protein uL6 (177 aa).

It belongs to the universal ribosomal protein uL6 family. In terms of assembly, part of the 50S ribosomal subunit.

Functionally, this protein binds to the 23S rRNA, and is important in its secondary structure. It is located near the subunit interface in the base of the L7/L12 stalk, and near the tRNA binding site of the peptidyltransferase center. The sequence is that of Large ribosomal subunit protein uL6 from Methylibium petroleiphilum (strain ATCC BAA-1232 / LMG 22953 / PM1).